Consider the following 416-residue polypeptide: Protein-glutamine gamma-glutamyltransferase (416 aa).

The segment at residues 1-29 (MHKRRRLLAFATVGAVICTAGFTPSVSQA) is a signal peptide (tat-type signal). Residues 30 to 85 (ASSGDGEEKGSYAETHGLTADDVESINALNERALTLGQPGKPPKELPPSASAPSRA) constitute a propeptide that is removed on maturation. Positions 64–103 (TLGQPGKPPKELPPSASAPSRAPSDDRETPPAEPLDRMPE) are disordered. Residues 76–85 (PPSASAPSRA) show a composition bias toward low complexity. The segment covering 86 to 103 (PSDDRETPPAEPLDRMPE) has biased composition (basic and acidic residues). Cys149 is an active-site residue. Residues 290–331 (GQDQRGSSDKRKYGDPEAFRPDQGTGLVDMSKDRSIPRSPAK) are disordered. Basic and acidic residues predominate over residues 295–309 (GSSDKRKYGDPEAFR). Residues Asp340 and His359 contribute to the active site.

It belongs to the bacterial TGase family. Post-translationally, predicted to be exported by the Tat system. The position of the signal peptide cleavage has not been experimentally proven.

It carries out the reaction L-glutaminyl-[protein] + L-lysyl-[protein] = [protein]-L-lysyl-N(6)-5-L-glutamyl-[protein] + NH4(+). Catalyzes the cross-linking of proteins and the conjugation of polyamines to proteins. This Streptomyces cinnamoneus (Streptoverticillium cinnamoneum) protein is Protein-glutamine gamma-glutamyltransferase.